A 468-amino-acid polypeptide reads, in one-letter code: Hexokinase (468 aa).

The Hexokinase domain occupies 10–466 (AKQLAELEVV…SGKGAALIAD (457 aa)). Positions 74–225 (TGAEVGEAYA…NVPAVCKAIV (152 aa)) are hexokinase small subdomain. Residue 85 to 90 (DFGGST) participates in ATP binding. Positions 163-189 (PVGFTFSFPCAQAALNSSFLIEWTKGF) are glucose-binding. Residues 226 to 455 (NDTVGTLVSC…KNIHYCIADD (230 aa)) are hexokinase large subdomain.

It belongs to the hexokinase family.

The catalysed reaction is a D-hexose + ATP = a D-hexose 6-phosphate + ADP + H(+). It catalyses the reaction D-mannose + ATP = D-mannose 6-phosphate + ADP + H(+). The enzyme catalyses D-fructose + ATP = D-fructose 6-phosphate + ADP + H(+). It carries out the reaction D-glucose + ATP = D-glucose 6-phosphate + ADP + H(+). The protein operates within carbohydrate metabolism; hexose metabolism. It participates in carbohydrate degradation; glycolysis; D-glyceraldehyde 3-phosphate and glycerone phosphate from D-glucose: step 1/4. Functionally, catalyzes the phosphorylation of various hexoses to hexose 6-phosphate. The polypeptide is Hexokinase (HXK) (Toxoplasma gondii).